The sequence spans 124 residues: Small ribosomal subunit protein uS12 (124 aa).

D89 carries the 3-methylthioaspartic acid modification.

The protein belongs to the universal ribosomal protein uS12 family. In terms of assembly, part of the 30S ribosomal subunit. Contacts proteins S8 and S17. May interact with IF1 in the 30S initiation complex.

Functionally, with S4 and S5 plays an important role in translational accuracy. Its function is as follows. Interacts with and stabilizes bases of the 16S rRNA that are involved in tRNA selection in the A site and with the mRNA backbone. Located at the interface of the 30S and 50S subunits, it traverses the body of the 30S subunit contacting proteins on the other side and probably holding the rRNA structure together. The combined cluster of proteins S8, S12 and S17 appears to hold together the shoulder and platform of the 30S subunit. The sequence is that of Small ribosomal subunit protein uS12 from Mannheimia succiniciproducens (strain KCTC 0769BP / MBEL55E).